A 570-amino-acid polypeptide reads, in one-letter code: Adenine deaminase (570 aa).

This sequence belongs to the metallo-dependent hydrolases superfamily. Adenine deaminase family. Mn(2+) serves as cofactor.

The catalysed reaction is adenine + H2O + H(+) = hypoxanthine + NH4(+). In Oleidesulfovibrio alaskensis (strain ATCC BAA-1058 / DSM 17464 / G20) (Desulfovibrio alaskensis), this protein is Adenine deaminase.